The sequence spans 166 residues: Protein-export protein SecB (166 aa).

The protein belongs to the SecB family. As to quaternary structure, homotetramer, a dimer of dimers. One homotetramer interacts with 1 SecA dimer.

The protein localises to the cytoplasm. In terms of biological role, one of the proteins required for the normal export of preproteins out of the cell cytoplasm. It is a molecular chaperone that binds to a subset of precursor proteins, maintaining them in a translocation-competent state. It also specifically binds to its receptor SecA. The chain is Protein-export protein SecB from Acidiphilium cryptum (strain JF-5).